Reading from the N-terminus, the 247-residue chain is UPF0309 protein LMOf2365_2617 (247 aa).

An SIS domain is found at 31 to 214; that stretch reads VAESIENDGV…ETMVNDNFTP (184 aa).

The protein belongs to the UPF0309 family.

The chain is UPF0309 protein LMOf2365_2617 from Listeria monocytogenes serotype 4b (strain F2365).